Consider the following 471-residue polypeptide: PTS system mannitol-specific EIICB component (471 aa).

Residues 1-29 (MTHTSENQAGFRVKIQRFGSYLSGMIMPN) lie on the Cytoplasmic side of the membrane. The 325-residue stretch at 18-342 (FGSYLSGMIM…FFVASIFLKS (325 aa)) folds into the PTS EIIC type-2 domain. The chain crosses the membrane as a helical span at residues 30–51 (IGAFIAWGIITALFIPTGWLPN). The Extracellular segment spans residues 52 to 55 (ETFA). A helical membrane pass occupies residues 56–76 (KLVGPMITYLLPLLIGYTGGK). Residues 77 to 139 (MIYDVRGGVV…QGFEMLVNNF (63 aa)) are Cytoplasmic-facing. Residues 140–161 (SAGIIGGLLTLAAFKGVGPVVS) traverse the membrane as a helical segment. Residues 162-170 (AISKTLAAG) lie on the Extracellular side of the membrane. A helical membrane pass occupies residues 171-191 (VEKIVDLHLLPLANIFIEPGK). The Cytoplasmic segment spans residues 192 to 278 (VLFLNNAINH…VLMRPILILA (87 aa)). A helical transmembrane segment spans residues 279-298 (AIAGGVSGVLTFTIFDAGLV). At 299–318 (AVPSPGSIFALLAMTPKGNY) the chain is on the extracellular side. The chain crosses the membrane as a helical span at residues 319–340 (LGVLAGVLVATAVSFFVASIFL). Topologically, residues 341–471 (KSAKNNEEDI…YDELIEMLKK (131 aa)) are cytoplasmic. Positions 383-471 (KKIVFACDAG…YDELIEMLKK (89 aa)) constitute a PTS EIIB type-2 domain. Cys-389 serves as the catalytic Phosphocysteine intermediate; for EIIB activity. Cys-389 carries the post-translational modification Phosphocysteine; by EIIA.

In terms of assembly, homodimer.

It localises to the cell membrane. The catalysed reaction is D-mannitol(out) + N(pros)-phospho-L-histidyl-[protein] = D-mannitol 1-phosphate(in) + L-histidyl-[protein]. Its function is as follows. The phosphoenolpyruvate-dependent sugar phosphotransferase system (sugar PTS), a major carbohydrate active transport system, catalyzes the phosphorylation of incoming sugar substrates concomitantly with their translocation across the cell membrane. The enzyme II CmtAB PTS system is involved in D-mannitol transport. The polypeptide is PTS system mannitol-specific EIICB component (Geobacillus stearothermophilus (Bacillus stearothermophilus)).